Reading from the N-terminus, the 426-residue chain is Pannexin-1 (426 aa).

Residues 1-40 (MAIAHLATEYVFSDFLLKEPTEPKFKGLRLELAVDKMVTC) lie on the Cytoplasmic side of the membrane. C40 bears the S-nitrosocysteine mark. Residues 41–61 (IAVGLPLLLISLAFAQEISIG) traverse the membrane as a helical segment. The Extracellular portion of the chain corresponds to 62–106 (TQISCFSPSSFSWRQAAFVDSYCWAAVQQKSSLQSESGNLPLWLH). 2 disulfide bridges follow: C66–C264 and C84–C245. The helical transmembrane segment at 107 to 127 (KFFPYILLLFAILLYLPALFW) threads the bilayer. Topologically, residues 128-216 (RFSAAPHLCS…HLIMKYISCR (89 aa)) are cytoplasmic. Position 198 is a phosphotyrosine (Y198). Residues 217 to 237 (LVTFVVILLACIYLSYYFSLS) form a helical membrane-spanning segment. Residues 238 to 277 (SLSDEFLCSIKSGVLKNDSTIPDRFQCKLIAVGIFQLLSL) are Extracellular-facing. N-linked (GlcNAc...) asparagine glycosylation is present at N254. Residues 278–298 (INLIVYALLIPVVVYTFFIPF) form a helical membrane-spanning segment. Over 299-426 (RQKTDILKVY…SRQRLLNPSC (128 aa)) the chain is Cytoplasmic. C346 is modified (S-nitrosocysteine).

It belongs to the pannexin family. In terms of assembly, homoheptameric. In terms of processing, S-nitrosylation inhibits channel currents and ATP release. N-glycosylation may play a role in cell surface targeting. Exists in three glycosylation states: non-glycosylated (GLY0), high-mannose glycosylated (GLY1), and fully mature glycosylated (GLY2). Post-translationally, phosphorylated at Tyr-198 by SRC. Phosphorylation activates ATP release. Constitutively phosphorylated in vascular smooth muscle cells. In terms of processing, cleaved by CASP3 and CASP7 during apoptosis. Cleavage opens the channel for the release of metabolites and induces plasma membrane permeability during apoptosis. As to expression, widely expressed, including in cartilage, skin, spleen and brain.

It localises to the cell membrane. Its subcellular location is the endoplasmic reticulum membrane. The enzyme catalyses chloride(in) = chloride(out). The catalysed reaction is iodide(out) = iodide(in). It catalyses the reaction Ca(2+)(in) = Ca(2+)(out). It carries out the reaction ATP(in) = ATP(out). The enzyme catalyses K(+)(in) = K(+)(out). The catalysed reaction is Na(+)(in) = Na(+)(out). It catalyses the reaction nitrate(in) = nitrate(out). It carries out the reaction L-aspartate(out) = L-aspartate(in). The enzyme catalyses L-glutamate(out) = L-glutamate(in). The catalysed reaction is D-gluconate(in) = D-gluconate(out). It catalyses the reaction spermidine(in) = spermidine(out). In terms of biological role, ion channel involved in a variety of physiological functions such as blood pressure regulation, apoptotic cell clearance and oogenesis. Forms anion-selective channels with relatively low conductance and an order of permeabilities: nitrate&gt;iodide&gt;chlroride&gt;&gt;aspartate=glutamate=gluconate. Can release ATP upon activation through phosphorylation or cleavage at C-terminus. May play a role as a Ca(2+)-leak channel to regulate ER Ca(2+) homeostasis. Its function is as follows. During apoptosis and after cleavage by caspases of the C-terminal tail, acts as a plasma membrane channel which mediates the regulated release of find-me signals, such as nucleotides ATP and UTP, and selective plasme membrane permeability. This is Pannexin-1 from Mus musculus (Mouse).